Reading from the N-terminus, the 194-residue chain is MKGLYQAAGRILVTLGILSVCSGVIAFFPVFSYKPWFTGWSVRIACPIWNGALAITTGVLLLLAYREWTQRYLGEATFTFVILSIMGCPLHFAIALESALLGPYCFYSFSGIAGTNYLGYAVTFPYPYAKFPLACVDPPHYEEYHLTLQALDLCLSFTLLCTSLTVFIKLSARLIQNGHINMQLPAGNPNPFSP.

The next 5 membrane-spanning stretches (helical) occupy residues Ile11 to Phe31, Ile44 to Ala64, Ala76 to Leu96, Ala99 to Gly119, and Leu148 to Ile168.

The protein localises to the membrane. The polypeptide is Transmembrane protein 212 (TMEM212) (Homo sapiens (Human)).